The chain runs to 219 residues: Probable GTP-binding protein EngB (219 aa).

The EngB-type G domain occupies 24 to 207 (VQPEVAFAGR…HALIESWVRP (184 aa)). GTP is bound by residues 32 to 39 (GRSNAGKS), 59 to 63 (GRTQH), 81 to 84 (DLPG), 148 to 151 (TKCD), and 185 to 188 (LFSA). Residues serine 39 and threonine 61 each contribute to the Mg(2+) site.

This sequence belongs to the TRAFAC class TrmE-Era-EngA-EngB-Septin-like GTPase superfamily. EngB GTPase family. Mg(2+) serves as cofactor.

Its function is as follows. Necessary for normal cell division and for the maintenance of normal septation. In Burkholderia mallei (strain ATCC 23344), this protein is Probable GTP-binding protein EngB.